A 389-amino-acid chain; its full sequence is NAD-dependent protein deacetylase sirtuin-2 (389 aa).

The tract at residues Met1–Gly34 is disordered. N-acetylalanine is present on Ala2. Phosphoserine is present on residues Ser23 and Ser25. Phosphothreonine is present on Thr27. The Nuclear export signal signature appears at Leu41–Leu51. At Ser53 the chain carries Phosphoserine. One can recognise a Deacetylase sirtuin-type domain in the interval Arg57–Lys338. NAD(+) is bound by residues Ala85–Thr89 and Asp95–Arg97. At Ser100 the chain carries Phosphoserine. Gln167–Asp170 lines the NAD(+) pocket. His187 functions as the Proton acceptor in the catalytic mechanism. Zn(2+) is bound by residues Cys195, Cys200, Cys221, and Cys224. Residues Thr262 to Ser263, Asn286 to Glu288, and Cys324 contribute to the NAD(+) site. Residues Ala350–Gln389 are disordered. Over residues Asp353–Pro369 the composition is skewed to polar residues. Ser368 and Ser372 each carry phosphoserine. Over residues Glu378 to Gln389 the composition is skewed to basic and acidic residues.

The protein belongs to the sirtuin family. Class I subfamily. As to quaternary structure, interacts with CDC20, FOXO3 and FZR1. Associates with microtubule in primary cortical mature neurons. Homotrimer. Interacts (via both phosphorylated, unphosphorylated, active or inactive forms) with HDAC6; the interaction is necessary for the complex to interact with alpha-tubulin, suggesting that these proteins belong to a large complex that deacetylates the cytoskeleton. Interacts with FOXO1; the interaction is disrupted upon serum-starvation or oxidative stress, leading to increased level of acetylated FOXO1 and induction of autophagy. Interacts with RELA; the interaction occurs in the cytoplasm and is increased in a TNF-alpha-dependent manner. Interacts with HOXA10; the interaction is direct. Interacts with YWHAB and YWHAG; the interactions occur in a AKT-dependent manner and increase SIRT2-dependent TP53 deacetylation. Interacts with MAPK1/ERK2 and MAPK3/ERK1; the interactions increase SIRT2 stability and deacetylation activity. Interacts (phosphorylated form) with KMT5A isoform 2; the interaction is direct, stimulates KMT5A-mediated methyltransferase activity on histone at 'Lys-20' (H4K20me1) and is increased in a H(2)O(2)-induced oxidative stress-dependent manner. Interacts with G6PD; the interaction is enhanced by H(2)O(2) treatment. Interacts with a G1/S-specific cyclin E-CDK2 complex. Interacts with AURKA, CDK5R1 (p35 form) and CDK5 and HIF1A. Interacts with the tRNA ligase SARS1; recruited to the VEGFA promoter via interaction with SARS1. Isoform 2 and isoform 4 associate with microtubules in primary cortical mature neurons. Interacts with BEX4; negatively regulates alpha-tubulin deacetylation by SIRT2. Requires Zn(2+) as cofactor. Post-translationally, phosphorylated at phosphoserine and phosphothreonine. Phosphorylated at Ser-368 by a mitotic kinase CDK1/cyclin B at the G2/M transition; phosphorylation regulates the delay in cell-cycle progression. Phosphorylated at Ser-368 by a mitotic kinase G1/S-specific cyclin E/Cdk2 complex; phosphorylation inactivates SIRT2-mediated alpha-tubulin deacetylation and thereby negatively regulates cell adhesion, cell migration and neurite outgrowth during neuronal differentiation. Phosphorylated by cyclin A/Cdk2 and p35-Cdk5 complexes and to a lesser extent by the cyclin D3/Cdk4 and cyclin B/Cdk1, in vitro. Dephosphorylated at Ser-368 by CDC14A and CDC14B around early anaphase. In terms of processing, acetylated by EP300; acetylation leads both to the decreased of SIRT2-mediated alpha-tubulin deacetylase activity and SIRT2-mediated down-regulation of TP53 transcriptional activity. Ubiquitinated. As to expression, isoform 1 is weakly expressed in the cortex at postnatal(P) days P1, P3 and P7, and increases progressively between P17 and older adult cortex. Isoform 1 is also expressed in heart, liver and skeletal muscle, weakly expressed in the striatum and spinal cord. Isoform 2 is not expressed in the cortex at P1, P3 and P7, and increases strongly and progressively between P17 and older adult cortex. Isoform 2 is also expressed in the heart, liver, striatum and spinal cord. Isoform 4 is weakly expressed in older adult cortex and spinal cords. Expressed in the cortex. Expressed in postnatal sciatic nerves during myelination and during remyelination after nerve injury. Expressed in neurons, oligodendrocytes, Schwann cells, Purkinje cells and in astrocytes of white matter. Strongly expressed in preadipocytes compared with differentiated adipocytes. Expressed in cerebellar granule cells. Expressed in the inner ear: in the cochlea, expressed in types I and V fibrocytes in the spiral ligament (SL) and slightly in stria vascularis (SV); in the organ of Corti, expressed in some supporting cells; in the crista ampullaris, expressed in spiral ganglion cells; also expressed in the endolymphatic sac (ES) epithelial cells (at protein level). Expressed in the brain, spinal cord, optic nerve and hippocampus. Strongly expressed in 6-8 week-old ovulated meiosis II oocytes and weakly expressed in 45-58 week-old ovulated meiosis II oocytes. Expressed in the cochlea, vestibule and acoustic nerve of the inner ear.

The protein localises to the nucleus. It is found in the cytoplasm. The protein resides in the perinuclear region. It localises to the perikaryon. Its subcellular location is the cytoskeleton. The protein localises to the cell projection. It is found in the growth cone. The protein resides in the myelin membrane. It localises to the microtubule organizing center. Its subcellular location is the centrosome. The protein localises to the spindle. It is found in the chromosome. The protein resides in the midbody. It localises to the centriole. The enzyme catalyses N(6)-acetyl-L-lysyl-[protein] + NAD(+) + H2O = 2''-O-acetyl-ADP-D-ribose + nicotinamide + L-lysyl-[protein]. It catalyses the reaction N(6)-tetradecanoyl-L-lysyl-[protein] + NAD(+) + H2O = 2''-O-tetradecanoyl-ADP-D-ribose + nicotinamide + L-lysyl-[protein]. It carries out the reaction N(6)-hexadecanoyl-L-lysyl-[protein] + NAD(+) + H2O = 2''-O-hexadecanoyl-ADP-D-ribose + nicotinamide + L-lysyl-[protein]. With respect to regulation, inhibited by Sirtinol, A3 and M15 small molecules. Inhibited by nicotinamide. Inhibited by a macrocyclic peptide inhibitor S2iL5. Inhibited by EP300-induced acetylation. Its function is as follows. NAD-dependent protein deacetylase, which deacetylates internal lysines on histone and alpha-tubulin as well as many other proteins such as key transcription factors. Participates in the modulation of multiple and diverse biological processes such as cell cycle control, genomic integrity, microtubule dynamics, cell differentiation, metabolic networks, and autophagy. Plays a major role in the control of cell cycle progression and genomic stability. Functions in the antephase checkpoint preventing precocious mitotic entry in response to microtubule stress agents, and hence allowing proper inheritance of chromosomes. Positively regulates the anaphase promoting complex/cyclosome (APC/C) ubiquitin ligase complex activity by deacetylating CDC20 and FZR1, then allowing progression through mitosis. Associates both with chromatin at transcriptional start sites (TSSs) and enhancers of active genes. Plays a role in cell cycle and chromatin compaction through epigenetic modulation of the regulation of histone H4 'Lys-20' methylation (H4K20me1) during early mitosis. Specifically deacetylates histone H4 at 'Lys-16' (H4K16ac) between the G2/M transition and metaphase enabling H4K20me1 deposition by KMT5A leading to ulterior levels of H4K20me2 and H4K20me3 deposition throughout cell cycle, and mitotic S-phase progression. Deacetylates KMT5A modulating KMT5A chromatin localization during the mitotic stress response. Also deacetylates histone H3 at 'Lys-57' (H3K56ac) during the mitotic G2/M transition. During oocyte meiosis progression, may deacetylate histone H4 at 'Lys-16' (H4K16ac) and alpha-tubulin, regulating spindle assembly and chromosome alignment by influencing microtubule dynamics and kinetochore function. Deacetylates histone H4 at 'Lys-16' (H4K16ac) at the VEGFA promoter and thereby contributes to regulate expression of VEGFA, a key regulator of angiogenesis. Deacetylates alpha-tubulin at 'Lys-40' and hence controls neuronal motility, oligodendroglial cell arbor projection processes and proliferation of non-neuronal cells. Phosphorylation at Ser-368 by a G1/S-specific cyclin E-CDK2 complex inactivates SIRT2-mediated alpha-tubulin deacetylation, negatively regulating cell adhesion, cell migration and neurite outgrowth during neuronal differentiation. Deacetylates PARD3 and participates in the regulation of Schwann cell peripheral myelination formation during early postnatal development and during postinjury remyelination. Involved in several cellular metabolic pathways. Plays a role in the regulation of blood glucose homeostasis by deacetylating and stabilizing phosphoenolpyruvate carboxykinase PCK1 activity in response to low nutrient availability. Acts as a key regulator in the pentose phosphate pathway (PPP) by deacetylating and activating the glucose-6-phosphate G6PD enzyme, and therefore, stimulates the production of cytosolic NADPH to counteract oxidative damage. Maintains energy homeostasis in response to nutrient deprivation as well as energy expenditure by inhibiting adipogenesis and promoting lipolysis. Attenuates adipocyte differentiation by deacetylating and promoting FOXO1 interaction to PPARG and subsequent repression of PPARG-dependent transcriptional activity. Plays a role in the regulation of lysosome-mediated degradation of protein aggregates by autophagy in neuronal cells. Deacetylates FOXO1 in response to oxidative stress or serum deprivation, thereby negatively regulating FOXO1-mediated autophagy. Deacetylates a broad range of transcription factors and co-regulators regulating target gene expression. Deacetylates transcriptional factor FOXO3 stimulating the ubiquitin ligase SCF(SKP2)-mediated FOXO3 ubiquitination and degradation. Deacetylates HIF1A and therefore promotes HIF1A degradation and inhibition of HIF1A transcriptional activity in tumor cells in response to hypoxia. Deacetylates RELA in the cytoplasm inhibiting NF-kappaB-dependent transcription activation upon TNF-alpha stimulation. Inhibits transcriptional activation by deacetylating p53/TP53 and EP300. Also deacetylates EIF5A. Functions as a negative regulator on oxidative stress-tolerance in response to anoxia-reoxygenation conditions. Plays a role as tumor suppressor. In addition to protein deacetylase activity, also has activity toward long-chain fatty acyl groups and mediates protein-lysine demyristoylation and depalmitoylation of target proteins, such as ARF6 and KRAS, thereby regulating their association with membranes. In terms of biological role, deacetylates alpha-tubulin. In Mus musculus (Mouse), this protein is NAD-dependent protein deacetylase sirtuin-2 (Sirt2).